A 599-amino-acid polypeptide reads, in one-letter code: Riboflavin biosynthesis protein PYRR, chloroplastic (599 aa).

The transit peptide at 1 to 17 (MALSFRISSSSPLICRA) directs the protein to the chloroplast. One can recognise a CMP/dCMP-type deaminase domain in the interval 30 to 152 (TTDAAFIRRA…ELRSHGIEVN (123 aa)).

The protein in the C-terminal section; belongs to the YbiA family.

It is found in the plastid. The protein resides in the chloroplast. The enzyme catalyses 5-amino-6-(5-phospho-D-ribitylamino)uracil + NADP(+) = 5-amino-6-(5-phospho-D-ribosylamino)uracil + NADPH + H(+). It carries out the reaction 2,5-diamino-6-hydroxy-4-(5-phosphoribosylamino)-pyrimidine + H2O = 2,5,6-triamino-4-hydroxypyrimidine + D-ribose 5-phosphate. It catalyses the reaction 5-amino-6-(5-phospho-D-ribosylamino)uracil + H2O = 5,6-diaminouracil + D-ribose 5-phosphate. It functions in the pathway cofactor biosynthesis; riboflavin biosynthesis; 5-amino-6-(D-ribitylamino)uracil from GTP: step 3/4. In terms of biological role, pyrimidine reductase involved in the riboflavin biosynthesis pathway. Also has a non-functional N-terminal deaminase domain that lacks the catalytically essential zinc-binding residues. Functionally, catalyzes the hydrolysis of the N-glycosidic bond in the first two intermediates of riboflavin biosynthesis, which are highly reactive metabolites, yielding relatively innocuous products. Thus, can divert a surplus of harmful intermediates into relatively harmless products and pre-empt the damage these intermediates would otherwise do. Helps maintain flavin levels. Has no activity against GTP, nucleoside monophosphates or ADP-ribose. This chain is Riboflavin biosynthesis protein PYRR, chloroplastic (PYRR), found in Arabidopsis thaliana (Mouse-ear cress).